A 129-amino-acid chain; its full sequence is MKTSFNKYGRKDGKDLCEIVLENDHGMIVKVLNYGATLEKVLLNDENMILSLNSPADYSQERNYLGGTVGRIAGRVRKGQWRHGLETHQLPINDGENHIHGGIGTDTEVWDFKPSCSENSARVDLTLLD.

The protein belongs to the aldose epimerase family.

The catalysed reaction is alpha-D-glucose = beta-D-glucose. It functions in the pathway carbohydrate metabolism; hexose metabolism. Mutarotase converts alpha-aldose to the beta-anomer. It is active on D-glucose, L-arabinose, D-xylose, D-galactose, maltose and lactose. The polypeptide is Aldose 1-epimerase (galM) (Lactobacillus helveticus (Lactobacillus suntoryeus)).